Consider the following 334-residue polypeptide: Ferredoxin--NADP reductase (334 aa).

FAD is bound by residues Asp-32, Gln-40, Tyr-45, Val-85, Phe-120, Asp-287, and Thr-327.

The protein belongs to the ferredoxin--NADP reductase type 2 family. As to quaternary structure, homodimer. Requires FAD as cofactor.

It carries out the reaction 2 reduced [2Fe-2S]-[ferredoxin] + NADP(+) + H(+) = 2 oxidized [2Fe-2S]-[ferredoxin] + NADPH. This Wolbachia pipientis subsp. Culex pipiens (strain wPip) protein is Ferredoxin--NADP reductase.